The chain runs to 416 residues: Gamma-glutamyl phosphate reductase (416 aa).

The protein belongs to the gamma-glutamyl phosphate reductase family.

The protein resides in the cytoplasm. It catalyses the reaction L-glutamate 5-semialdehyde + phosphate + NADP(+) = L-glutamyl 5-phosphate + NADPH + H(+). It participates in amino-acid biosynthesis; L-proline biosynthesis; L-glutamate 5-semialdehyde from L-glutamate: step 2/2. In terms of biological role, catalyzes the NADPH-dependent reduction of L-glutamate 5-phosphate into L-glutamate 5-semialdehyde and phosphate. The product spontaneously undergoes cyclization to form 1-pyrroline-5-carboxylate. The sequence is that of Gamma-glutamyl phosphate reductase from Salmonella arizonae (strain ATCC BAA-731 / CDC346-86 / RSK2980).